The primary structure comprises 199 residues: Patulin biosynthesis cluster protein F (199 aa).

A signal peptide spans 1 to 21; the sequence is MKSSLWVSLAVSLIGLGPAAA. N-linked (GlcNAc...) asparagine glycosylation is found at Asn129 and Asn183.

Belongs to the patF family.

The protein resides in the cytoplasm. Its subcellular location is the cytosol. It catalyses the reaction phyllostine = neopatulin. The protein operates within mycotoxin biosynthesis; patulin biosynthesis. Its function is as follows. Part of the gene cluster that mediates the biosynthesis of patulin, an acetate-derived tetraketide mycotoxin produced by several fungal species that shows antimicrobial properties against several bacteria. PatF catalyzes the conversion of phyllostine into neopatulin. The pathway begins with the synthesis of 6-methylsalicylic acid by the polyketide synthase (PKS) patK via condensation of acetate and malonate units. The 6-methylsalicylic acid decarboxylase patG then catalyzes the decarboxylation of 6-methylsalicylic acid to yield m-cresol (also known as 3-methylphenol). These first reactions occur in the cytosol. The intermediate m-cresol is then transported into the endoplasmic reticulum where the cytochrome P450 monooxygenase patH converts it to m-hydroxybenzyl alcohol, which is further converted to gentisyl alcohol by the cytochrome P450 monooxygenase patI. The oxidoreductases patJ and patO further convert gentisyl alcohol to isoepoxydon in the vacuole. PatN catalyzes then the transformation of isoepoxydon into phyllostine. The cluster protein patF is responsible for the conversion from phyllostine to neopatulin whereas the alcohol dehydrogenase patD converts neopatulin to E-ascladiol. The steps between isoepoxydon and E-ascladiol occur in the cytosol, and E-ascladiol is probably secreted to the extracellular space by one of the cluster-specific transporters patC or patM. Finally, the secreted patulin synthase patE catalyzes the conversion of E-ascladiol to patulin. This chain is Patulin biosynthesis cluster protein F, found in Penicillium expansum (Blue mold rot fungus).